The primary structure comprises 342 residues: MYNLKDMTLEEMEEFFVNIGESRYRAKQIYKWIYGKKVTDFDQMTDISKNLRSKLKEIAYVSQLKIEERRVSEIDDTVKYLFLLEDGNIIEGVAIKYRFGNTACVSTQVGCNMRCSFCASAIGGKVRDLKASEMVDQVMAIDSDYGKISNIVLMGSGEPFDNYDEVMKFIKIVNNPHGLGIGSRHITISTCGIVPKIYQFADEKLQVNLSISLHAPNDELRTQLMPINKAYPLEELMKACKYYVDKTRRRITFEYSLIEGVNDKKEHAYQLVDLLKGMLCHINLIPINYVREIGFKKANNEKVMMFKRIIEDAGISCTVRRELGSDIEAACGQLRRKYLKER.

The active-site Proton acceptor is Glu-91. The region spanning 97 to 326 (YRFGNTACVS…CTVRRELGSD (230 aa)) is the Radical SAM core domain. A disulfide bond links Cys-104 and Cys-331. The [4Fe-4S] cluster site is built by Cys-111, Cys-115, and Cys-118. Residues 157–158 (GE), Ser-189, 212–214 (SLH), and Asn-288 contribute to the S-adenosyl-L-methionine site. The active-site S-methylcysteine intermediate is Cys-331.

It belongs to the radical SAM superfamily. RlmN family. Requires [4Fe-4S] cluster as cofactor.

The protein resides in the cytoplasm. The catalysed reaction is adenosine(2503) in 23S rRNA + 2 reduced [2Fe-2S]-[ferredoxin] + 2 S-adenosyl-L-methionine = 2-methyladenosine(2503) in 23S rRNA + 5'-deoxyadenosine + L-methionine + 2 oxidized [2Fe-2S]-[ferredoxin] + S-adenosyl-L-homocysteine. The enzyme catalyses adenosine(37) in tRNA + 2 reduced [2Fe-2S]-[ferredoxin] + 2 S-adenosyl-L-methionine = 2-methyladenosine(37) in tRNA + 5'-deoxyadenosine + L-methionine + 2 oxidized [2Fe-2S]-[ferredoxin] + S-adenosyl-L-homocysteine. Its function is as follows. Specifically methylates position 2 of adenine 2503 in 23S rRNA and position 2 of adenine 37 in tRNAs. This chain is Probable dual-specificity RNA methyltransferase RlmN, found in Thermoanaerobacter pseudethanolicus (strain ATCC 33223 / 39E) (Clostridium thermohydrosulfuricum).